Here is a 259-residue protein sequence, read N- to C-terminus: Glucose-1-phosphate thymidylyltransferase (259 aa).

Belongs to the inositol monophosphatase superfamily.

It catalyses the reaction dTTP + alpha-D-glucose 1-phosphate + H(+) = dTDP-alpha-D-glucose + diphosphate. The protein operates within antibiotic biosynthesis; streptomycin biosynthesis. The chain is Glucose-1-phosphate thymidylyltransferase (strO) from Streptomyces griseus.